The primary structure comprises 137 residues: Major seminal plasma glycoprotein PSP-II (137 aa).

Positions 1–21 (MKLGTAIPWALLLSTATLVST) are cleaved as a signal peptide. Cystine bridges form between C30–C51 and C74–C95. Residues 30–131 (CGRVIKDTSG…SPFLIYFYGS (102 aa)) enclose the CUB domain. The N-linked (GlcNAc...) (complex) asparagine glycan is linked to N119.

In terms of assembly, monomer or heterodimer with PSP-I (depending on the type of glycosylation of PSP-I). In terms of tissue distribution, seminal plasma or sperm.

The protein resides in the secreted. In Sus scrofa (Pig), this protein is Major seminal plasma glycoprotein PSP-II.